Here is a 267-residue protein sequence, read N- to C-terminus: Probable beta-lactamase YbxI (267 aa).

Residues 1 to 23 (MKKWIYVVLVLSIAGIGGFSVHA) form the signal peptide. Ser76 acts as the Acyl-ester intermediate in catalysis. At Lys79 the chain carries N6-carboxylysine. 214-216 (KTG) lines the substrate pocket.

It belongs to the class-D beta-lactamase family.

The enzyme catalyses a beta-lactam + H2O = a substituted beta-amino acid. The protein is Probable beta-lactamase YbxI (ybxI) of Bacillus subtilis (strain 168).